A 65-amino-acid polypeptide reads, in one-letter code: 7 kDa A-type inclusion protein (65 aa).

Positions 1–20 are enriched in polar residues; the sequence is MSNQNIPQLSEYQTSVSQVA. Residues 1-31 are disordered; that stretch reads MSNQNIPQLSEYQTSVSQVAVTPPPKPETPQ.

The protein is 7 kDa A-type inclusion protein of Vaccinia virus (strain Copenhagen) (VACV).